A 198-amino-acid chain; its full sequence is Recombination protein RecR (198 aa).

The C4-type zinc finger occupies 57 to 72 (CSICCNLSEHDPCPIC). Positions 80 to 175 (NIVCVVETPQ…KVTRLGYGLP (96 aa)) constitute a Toprim domain.

Belongs to the RecR family.

Its function is as follows. May play a role in DNA repair. It seems to be involved in an RecBC-independent recombinational process of DNA repair. It may act with RecF and RecO. The chain is Recombination protein RecR from Endomicrobium trichonymphae.